The chain runs to 133 residues: Large-conductance mechanosensitive channel (133 aa).

Helical transmembrane passes span 14–34 and 67–87; these read VVDL…VSSL and GNFI…FMFV.

This sequence belongs to the MscL family. As to quaternary structure, homopentamer.

Its subcellular location is the cell membrane. In terms of biological role, channel that opens in response to stretch forces in the membrane lipid bilayer. May participate in the regulation of osmotic pressure changes within the cell. The sequence is that of Large-conductance mechanosensitive channel from Bacillus cereus (strain AH187).